A 732-amino-acid polypeptide reads, in one-letter code: Anthranilate synthase (732 aa).

The Glutamine amidotransferase type-1 domain maps to 533 to 728 (RVLLVDHDDS…MDRLAAGALT (196 aa)). 583-585 (GPG) contributes to the L-glutamine binding site. The Nucleophile; for GATase activity role is filled by C610. L-glutamine-binding positions include Q614 and 660–661 (SL). Catalysis depends on for GATase activity residues H699 and E701.

It catalyses the reaction chorismate + L-glutamine = anthranilate + pyruvate + L-glutamate + H(+). The protein operates within amino-acid biosynthesis; L-tryptophan biosynthesis; L-tryptophan from chorismate: step 1/5. This is Anthranilate synthase (trpE(G)) from Azospirillum brasilense.